The sequence spans 179 residues: Large ribosomal subunit protein uL6 (179 aa).

The protein belongs to the universal ribosomal protein uL6 family. In terms of assembly, part of the 50S ribosomal subunit.

In terms of biological role, this protein binds to the 23S rRNA, and is important in its secondary structure. It is located near the subunit interface in the base of the L7/L12 stalk, and near the tRNA binding site of the peptidyltransferase center. The chain is Large ribosomal subunit protein uL6 from Pelodictyon phaeoclathratiforme (strain DSM 5477 / BU-1).